A 153-amino-acid chain; its full sequence is D-erythrulose-4-phosphate isomerase 1 (153 aa).

The active-site Proton acceptor is Cys69.

It belongs to the LacAB/RpiB family.

The enzyme catalyses D-erythrulose 4-phosphate = D-erythrose 4-phosphate. Its pathway is carbohydrate metabolism; erythritol degradation. The protein operates within carbohydrate metabolism; D-threitol degradation. Functionally, catalyzes the isomerization of D-erythrulose-4P to D-erythrose-4P. Involved in the degradation pathways of erythritol and D-threitol, that allow M.smegmatis to grow on these compounds as the sole carbon source. This Mycolicibacterium smegmatis (strain ATCC 700084 / mc(2)155) (Mycobacterium smegmatis) protein is D-erythrulose-4-phosphate isomerase 1.